A 2670-amino-acid polypeptide reads, in one-letter code: Inositol 1,4,5-trisphosphate-gated calcium channel ITPR3 (2670 aa).

Over 1–2233 the chain is Cytoplasmic; sequence MNEMSSFLHI…YVEGASTGVL (2233 aa). MIR domains follow at residues 113–173, 174–224, 232–288, 295–372, and 378–434; these read GDVV…LRSN, GDNV…INLF, EEVL…VEVV, GGAG…LDPT, and DSFV…IVSV. Residues Arg-266, Leu-269, and Arg-270 each contribute to the 1D-myo-inositol 1,4,5-trisphosphate site. 1D-myo-inositol 1,4,5-trisphosphate-binding residues include Arg-503, Lys-507, Arg-510, Tyr-567, Arg-568, and Lys-569. Arg-743 is a binding site for Ca(2+). Ser-916 and Ser-934 each carry phosphoserine. The Ca(2+) site is built by Glu-1122 and Glu-1125. The segment covering 1138–1153 has biased composition (basic and acidic residues); the sequence is EVEAGATKDKKERPSD. 2 disordered regions span residues 1138–1164 and 1807–1835; these read EVEA…HGEK and NMSD…SFSM. Ser-1813, Ser-1832, and Ser-1834 each carry phosphoserine. Residues Glu-1881 and Glu-1945 each contribute to the Ca(2+) site. ATP is bound by residues Ala-1995, Glu-2148, and Lys-2151. A helical membrane pass occupies residues 2234–2254; it reads GSPLISLLFWILICFSIAALF. The Extracellular segment spans residues 2255-2262; sequence TKRYSVRP. Residues 2263-2283 traverse the membrane as a helical segment; the sequence is LIVALILRSIYYLGIGPTLNI. The Cytoplasmic segment spans residues 2284–2292; the sequence is LGALNLTNK. A helical transmembrane segment spans residues 2293 to 2310; sequence IVFVVSFVGNRGTFIRGY. Topologically, residues 2311–2324 are extracellular; the sequence is KAMVMDMEFLYHVG. The chain crosses the membrane as a helical span at residues 2325-2345; the sequence is YILTSVLGLFAHELFYSILLF. Topologically, residues 2346–2367 are cytoplasmic; the sequence is DLIYREETLFNVIKSVTRNGRS. A helical transmembrane segment spans residues 2368–2388; it reads ILLTALLALILVYLFSIVGFL. The Extracellular segment spans residues 2389 to 2495; the sequence is FLKDDFILEV…ESLFPARVVY (107 aa). A disulfide bridge links Cys-2454 with Cys-2460. Residues 2496 to 2516 form a helical membrane-spanning segment; it reads DLLFFFIVIIIVLNLIFGVII. Topologically, residues 2517–2670 are cytoplasmic; that stretch reads DTFADLRSEK…FVDVQNCMSR (154 aa). The ATP site is built by Cys-2537 and Phe-2538. Cys-2537 contributes to the Zn(2+) binding site. Residues Cys-2540 and His-2557 each contribute to the Zn(2+) site. ATP is bound by residues Lys-2559, His-2562, Asn-2563, and Met-2564. His-2562 contributes to the Zn(2+) binding site. A Ca(2+)-binding site is contributed by Thr-2580. A phosphoserine mark is found at Ser-2608 and Ser-2669.

The protein belongs to the InsP3 receptor family. Homodimer. Homotetramer. Interacts with TRPC1, TRPC3, TRPC4. Interacts with TRPV4. Interacts with SIGMAR1. Found in a complex with AKT1 and PML; this interaction modulates IP3R3-phosphorylation and in turn ITPR3-dependent calcium release. Interacts with IRAG2 (via coiled-coil domain). Interacts with CABP1. Interacts with TMBIM4/LFG4. Interacts with CEMIP. Interacts with TESPA1. Interacts with TMEM203. Interacts with BOK; regulates ITPR3 expression. Interacts with BCL2L10. Interacts with CHGA and CHGB. Post-translationally, phosphorylated by AKT1 on serine and/or threonine residues.

The protein resides in the endoplasmic reticulum membrane. Its subcellular location is the cytoplasmic vesicle. It is found in the secretory vesicle membrane. It catalyses the reaction Ca(2+)(in) = Ca(2+)(out). With respect to regulation, inositol 1,4,5-trisphosphate-gated calcium channel is regulated by cytosolic calcium in a biphasic manner. At low concentrations, cytosolic calcium binds at a high-affinity juxtamembrane domain (JD) calcium binding site, allowing ITPR3 to activate by escaping a low-energy resting state through an ensemble of preactivated states. At high cytosolic calcium concentrations, ITPR3 preferentially enters an inhibited state stabilized by calcium binding at a second, low-affinity cytoplasmic domain (CD) calcium binding site. Its function is as follows. Inositol 1,4,5-trisphosphate-gated calcium channel that, upon 1D-myo-inositol 1,4,5-trisphosphate binding, transports calcium from the endoplasmic reticulum lumen to cytoplasm, thus releasing the intracellular calcium and therefore participates in cellular calcium ion homeostasis. 1D-myo-inositol 1,4,5-trisphosphate binds to the ligand-free channel without altering its global conformation, yielding the low-energy resting state, then progresses through resting-to preactivated transitions to the higher energy preactivated state, which increases affinity for calcium, promoting binding of the low basal cytosolic calcium at the juxtamembrane domain (JD) site, favoring the transition through the ensemble of high-energy intermediate states along the trajectory to the fully-open activated state. Upon opening, releases calcium in the cytosol where it can bind to the low-affinity cytoplasmic domain (CD) site and stabilizes the inhibited state to terminate calcium release. This chain is Inositol 1,4,5-trisphosphate-gated calcium channel ITPR3, found in Mus musculus (Mouse).